The following is a 1002-amino-acid chain: SIT4-associating protein SAP155 (1002 aa).

5 disordered regions span residues 51-131, 214-273, 609-645, 868-901, and 940-1002; these read GTSD…APMM, QQQL…ANED, EQLKTKHSPTRDTDHDLKNNNGKIDNDNNDNDDESDY, DNTTVLTPNGDASNNNEILDSDTGSSNGTSGGGQ, and NTEN…YDHE. At Ser-58 the chain carries Phosphoserine. Residues 62-97 show a composition bias toward basic and acidic residues; it reads EYSHGDEVKTARGDQKSRFEKDDQQERYEKEEEERS. Residues 98 to 114 show a composition bias toward low complexity; that stretch reads MNSSESSTTSFSSGSTS. The span at 220–241 shows a compositional bias: acidic residues; it reads SSQEDVYVESDTEQEEEKEDDN. At Ser-255 the chain carries Phosphoserine. A compositionally biased stretch (acidic residues) spans 262 to 273; that stretch reads NNNDDDDDANED. Positions 609–626 are enriched in basic and acidic residues; the sequence is EQLKTKHSPTRDTDHDLK. A phosphothreonine mark is found at Thr-613 and Thr-618. Positions 635–645 are enriched in acidic residues; that stretch reads DNNDNDDESDY. Residues 868 to 885 show a composition bias toward polar residues; it reads DNTTVLTPNGDASNNNEI. The span at 956–976 shows a compositional bias: low complexity; the sequence is SNSNINNTNHNSNNSNNNDNN. A compositionally biased stretch (acidic residues) spans 991-1002; the sequence is EDADNDNDYDHE.

The protein belongs to the SAPS family. As to quaternary structure, associates with the SIT4 protein phosphatase catalytic subunit in a cell-cycle-dependent manner. In terms of processing, hyperphosphorylated in the absence of SIT4.

The protein resides in the cytoplasm. In terms of biological role, positive regulator of protein phosphatase SIT4. Involved in directing expression of TOR-repressed genes and in dephosphorylation of NPR1 in response to nutrient starvation. Negatively modulates K(+) efflux of the cell by the Na(+)-K(+)/H(+) antiporter NHA1. This is SIT4-associating protein SAP155 (SAP155) from Saccharomyces cerevisiae (strain ATCC 204508 / S288c) (Baker's yeast).